Reading from the N-terminus, the 537-residue chain is Apoptosis inhibitor 5-like protein API5 (537 aa).

The interval 9 to 363 (AEVERLYELG…TTNSLCGYKI (355 aa)) is ARM-like and Heat-like helical repeats. The segment at 465 to 537 (WMEQPKKPAP…GGRGRGWGYR (73 aa)) is disordered. The span at 474–492 (PTTTGGKRSQPATNGNTPA) shows a compositional bias: polar residues.

Belongs to the API5 family. As to quaternary structure, interacts with AIP1 and AIP2.

Its subcellular location is the nucleus. Putative anti-apoptotic factor involved in the regulation of tapetal programmed cell death (PCD) and degeneration during anther development. Interacts directly with the DEAD-box ATP-dependent RNA helicases AIP1 and AIP2 that form dimers and bind the promoter region of the cysteine protease CP1 involved in tapetum PCD. The sequence is that of Apoptosis inhibitor 5-like protein API5 from Oryza sativa subsp. japonica (Rice).